A 357-amino-acid chain; its full sequence is THUMP domain-containing protein 1 (357 aa).

Residues 1–10 (MAARIQQSPQ) show a composition bias toward polar residues. Disordered stretches follow at residues 1–38 (MAARIQQSPQPGGGKRKGKAQYVQAKRARRWDGGGPRQ) and 74–95 (GPEKFADKDQQPSGSEGEDDDV). N-acetylalanine is present on A2. 4 positions are modified to phosphoserine: S8, S86, S88, and S119. The THUMP domain maps to 147–254 (DIYKTKKKKT…KAVCCLSVVK (108 aa)). S270 carries the post-translational modification Phosphoserine. Polar residues-rich tracts occupy residues 276–287 (QLNPKQAAQTGN) and 298–315 (KSSQNDPAEGKNNQQVVP). The interval 276–357 (QLNPKQAAQT…EGSESNENDL (82 aa)) is disordered.

Belongs to the THUMPD1 family. As to quaternary structure, interacts with NAT10. Binds tRNA.

Its function is as follows. Functions as a tRNA-binding adapter to mediate NAT10-dependent tRNA acetylation modifying cytidine to N4-acetylcytidine (ac4C). The sequence is that of THUMP domain-containing protein 1 (THUMPD1) from Bos taurus (Bovine).